The following is a 259-amino-acid chain: Protein CDI (259 aa).

Positions 236–259 (FADLWLNEMEEYNKENKKEADNAK) form a coiled coil.

In terms of tissue distribution, mostly expressed in pollen grains and pollen tubes, and, at low levels, in seedlings, roots, stems, leaves, flowers and siliques.

It localises to the cytoplasm. It is found in the cytosol. In terms of biological role, probable nucleotide-diphospho-sugar transferase required for pollen germination and tube growth. This is Protein CDI from Arabidopsis thaliana (Mouse-ear cress).